Consider the following 442-residue polypeptide: tRNA-2-methylthio-N(6)-dimethylallyladenosine synthase (442 aa).

One can recognise an MTTase N-terminal domain in the interval 2–120 (KKVFIRTFGC…LPKMIVDKET (119 aa)). [4Fe-4S] cluster is bound by residues Cys11, Cys49, Cys83, Cys157, Cys161, and Cys164. Residues 143–375 (RVEGGAAFVS…NEVIEAETAR (233 aa)) form the Radical SAM core domain. The 64-residue stretch at 378–441 (QTMVGTVQRC…TFSLRGKVVE (64 aa)) folds into the TRAM domain.

Belongs to the methylthiotransferase family. MiaB subfamily. Monomer. [4Fe-4S] cluster is required as a cofactor.

The protein resides in the cytoplasm. The catalysed reaction is N(6)-dimethylallyladenosine(37) in tRNA + (sulfur carrier)-SH + AH2 + 2 S-adenosyl-L-methionine = 2-methylsulfanyl-N(6)-dimethylallyladenosine(37) in tRNA + (sulfur carrier)-H + 5'-deoxyadenosine + L-methionine + A + S-adenosyl-L-homocysteine + 2 H(+). In terms of biological role, catalyzes the methylthiolation of N6-(dimethylallyl)adenosine (i(6)A), leading to the formation of 2-methylthio-N6-(dimethylallyl)adenosine (ms(2)i(6)A) at position 37 in tRNAs that read codons beginning with uridine. In Neisseria meningitidis serogroup B (strain ATCC BAA-335 / MC58), this protein is tRNA-2-methylthio-N(6)-dimethylallyladenosine synthase.